We begin with the raw amino-acid sequence, 364 residues long: Chorismate synthase (364 aa).

Arg-47 is an NADP(+) binding site. Residues 125–127 (RFS), Gly-285, 300–304 (KPTPS), and Arg-327 contribute to the FMN site.

It belongs to the chorismate synthase family. As to quaternary structure, homotetramer. Requires FMNH2 as cofactor.

It carries out the reaction 5-O-(1-carboxyvinyl)-3-phosphoshikimate = chorismate + phosphate. The protein operates within metabolic intermediate biosynthesis; chorismate biosynthesis; chorismate from D-erythrose 4-phosphate and phosphoenolpyruvate: step 7/7. Catalyzes the anti-1,4-elimination of the C-3 phosphate and the C-6 proR hydrogen from 5-enolpyruvylshikimate-3-phosphate (EPSP) to yield chorismate, which is the branch point compound that serves as the starting substrate for the three terminal pathways of aromatic amino acid biosynthesis. This reaction introduces a second double bond into the aromatic ring system. This is Chorismate synthase from Dehalococcoides mccartyi (strain ATCC BAA-2100 / JCM 16839 / KCTC 5957 / BAV1).